The sequence spans 535 residues: KNR4/SMI1 homolog (535 aa).

Residues 354–363 (ERKLPEEPKR) show a composition bias toward basic and acidic residues. The segment at 354–535 (ERKLPEEPKR…LKDDFENVAL (182 aa)) is disordered. 3 stretches are compositionally biased toward polar residues: residues 364-384 (TVSSSQGSQNTVEPAEQQETA), 397-407 (TSLSVDNTGTK), and 456-469 (ESTNAVENTETSQE). The segment covering 474–483 (TSEKPEEKPK) has biased composition (basic and acidic residues). Over residues 484-494 (KQSKKASKKKG) the composition is skewed to basic residues. Basic and acidic residues-rich tracts occupy residues 495 to 509 (KKDEKKDTDSKTKEP) and 524 to 535 (EKLKDDFENVAL).

Belongs to the KNR4/SMI1 family.

This Kluyveromyces lactis (strain ATCC 8585 / CBS 2359 / DSM 70799 / NBRC 1267 / NRRL Y-1140 / WM37) (Yeast) protein is KNR4/SMI1 homolog.